The primary structure comprises 132 residues: ATP synthase epsilon chain (132 aa).

Belongs to the ATPase epsilon chain family. As to quaternary structure, F-type ATPases have 2 components, CF(1) - the catalytic core - and CF(0) - the membrane proton channel. CF(1) has five subunits: alpha(3), beta(3), gamma(1), delta(1), epsilon(1). CF(0) has three main subunits: a, b and c.

It localises to the cell inner membrane. Functionally, produces ATP from ADP in the presence of a proton gradient across the membrane. In Anaeromyxobacter sp. (strain Fw109-5), this protein is ATP synthase epsilon chain.